The primary structure comprises 235 residues: 7-carboxy-7-deazaguanine synthase (235 aa).

Substrate is bound by residues 27–29 and Arg42; that span reads LQG. One can recognise a Radical SAM core domain in the interval 33 to 235; it reads FSGQPSVFVR…VQVHKILKIA (203 aa). Residues Cys46, Cys50, and Cys53 each coordinate [4Fe-4S] cluster. Thr55 contacts Mg(2+). Residue Thr87 participates in substrate binding. Residues Gly89 and 133–135 contribute to the S-adenosyl-L-methionine site; that span reads SPK.

The protein belongs to the radical SAM superfamily. 7-carboxy-7-deazaguanine synthase family. As to quaternary structure, homodimer. The cofactor is [4Fe-4S] cluster. S-adenosyl-L-methionine is required as a cofactor. Mg(2+) serves as cofactor.

It catalyses the reaction 6-carboxy-5,6,7,8-tetrahydropterin + H(+) = 7-carboxy-7-deazaguanine + NH4(+). The protein operates within purine metabolism; 7-cyano-7-deazaguanine biosynthesis. Catalyzes the complex heterocyclic radical-mediated conversion of 6-carboxy-5,6,7,8-tetrahydropterin (CPH4) to 7-carboxy-7-deazaguanine (CDG), a step common to the biosynthetic pathways of all 7-deazapurine-containing compounds. The protein is 7-carboxy-7-deazaguanine synthase of Rhodospirillum rubrum (strain ATCC 11170 / ATH 1.1.1 / DSM 467 / LMG 4362 / NCIMB 8255 / S1).